Consider the following 758-residue polypeptide: Glucan endo-1,3-beta-D-glucosidase (758 aa).

The tat-type signal signal peptide spans 1–34 (MSHASRRRWRRATTSAATAALLCGALLTFPSAPA). The beta-sandwich subdomain stretch occupies residues 38–251 (VRLGSGSYTT…SGYASVALLP (214 aa)). The region spanning 38 to 704 (VRLGSGSYTT…QWLSTLAEFG (667 aa)) is the GH81 domain. Positions 252 to 342 (SPDDFDRYAP…EGDRFTTELT (91 aa)) are alpha/beta subdomain. Positions 352–704 (TVDSADHQRL…QWLSTLAEFG (353 aa)) are (alpha/beta)6 barrel subdomain. 7 residues coordinate (1,3-beta-D-glucosyl)n: Y382, K386, D457, H461, N532, E534, and E538. Residue D457 is part of the active site. Catalysis depends on residues E534 and E538.

Belongs to the glycosyl hydrolase 81 family. Predicted to be exported by the Tat system. The position of the signal peptide cleavage has not been experimentally proven.

The protein resides in the secreted. It catalyses the reaction Hydrolysis of (1-&gt;3)-beta-D-glucosidic linkages in (1-&gt;3)-beta-D-glucans.. Functionally, cleaves internal linkages in 1,3-beta-glucan. May contribute to biomass degradation by hydrolyzing the 1,3-beta-linked plant polymer callose that is present in decomposing plant tissue. The polypeptide is Glucan endo-1,3-beta-D-glucosidase (Thermobifida fusca (strain YX)).